The sequence spans 110 residues: Large ribosomal subunit protein uL22 (110 aa).

This sequence belongs to the universal ribosomal protein uL22 family. Part of the 50S ribosomal subunit.

Functionally, this protein binds specifically to 23S rRNA; its binding is stimulated by other ribosomal proteins, e.g. L4, L17, and L20. It is important during the early stages of 50S assembly. It makes multiple contacts with different domains of the 23S rRNA in the assembled 50S subunit and ribosome. In terms of biological role, the globular domain of the protein is located near the polypeptide exit tunnel on the outside of the subunit, while an extended beta-hairpin is found that lines the wall of the exit tunnel in the center of the 70S ribosome. This Idiomarina loihiensis (strain ATCC BAA-735 / DSM 15497 / L2-TR) protein is Large ribosomal subunit protein uL22.